The primary structure comprises 385 residues: Phospho-N-acetylmuramoyl-pentapeptide-transferase (385 aa).

10 consecutive transmembrane segments (helical) span residues 23-43, 79-99, 103-123, 135-155, 186-206, 218-238, 258-278, 282-302, 307-327, and 362-382; these read FITV…LGAG, MGGI…GAVA, VWLS…DDYV, AWYK…VLYF, LGVD…VTAV, GLTT…VYVS, LTVF…YNGY, VFMG…TILM, LLLP…IVQT, and KIVT…LLIL.

The protein belongs to the glycosyltransferase 4 family. MraY subfamily. Requires Mg(2+) as cofactor.

Its subcellular location is the cell inner membrane. It catalyses the reaction UDP-N-acetyl-alpha-D-muramoyl-L-alanyl-gamma-D-glutamyl-meso-2,6-diaminopimeloyl-D-alanyl-D-alanine + di-trans,octa-cis-undecaprenyl phosphate = di-trans,octa-cis-undecaprenyl diphospho-N-acetyl-alpha-D-muramoyl-L-alanyl-D-glutamyl-meso-2,6-diaminopimeloyl-D-alanyl-D-alanine + UMP. It functions in the pathway cell wall biogenesis; peptidoglycan biosynthesis. Its function is as follows. Catalyzes the initial step of the lipid cycle reactions in the biosynthesis of the cell wall peptidoglycan: transfers peptidoglycan precursor phospho-MurNAc-pentapeptide from UDP-MurNAc-pentapeptide onto the lipid carrier undecaprenyl phosphate, yielding undecaprenyl-pyrophosphoryl-MurNAc-pentapeptide, known as lipid I. This is Phospho-N-acetylmuramoyl-pentapeptide-transferase from Salinibacter ruber (strain DSM 13855 / M31).